A 169-amino-acid polypeptide reads, in one-letter code: Peptide deformylase (169 aa).

Residues Cys-91 and His-133 each coordinate Fe cation. Residue Glu-134 is part of the active site. His-137 serves as a coordination point for Fe cation.

The protein belongs to the polypeptide deformylase family. The cofactor is Fe(2+).

It carries out the reaction N-terminal N-formyl-L-methionyl-[peptide] + H2O = N-terminal L-methionyl-[peptide] + formate. Removes the formyl group from the N-terminal Met of newly synthesized proteins. Requires at least a dipeptide for an efficient rate of reaction. N-terminal L-methionine is a prerequisite for activity but the enzyme has broad specificity at other positions. The polypeptide is Peptide deformylase (Hydrogenovibrio crunogenus (strain DSM 25203 / XCL-2) (Thiomicrospira crunogena)).